The chain runs to 160 residues: SsrA-binding protein (160 aa).

This sequence belongs to the SmpB family.

The protein localises to the cytoplasm. Functionally, required for rescue of stalled ribosomes mediated by trans-translation. Binds to transfer-messenger RNA (tmRNA), required for stable association of tmRNA with ribosomes. tmRNA and SmpB together mimic tRNA shape, replacing the anticodon stem-loop with SmpB. tmRNA is encoded by the ssrA gene; the 2 termini fold to resemble tRNA(Ala) and it encodes a 'tag peptide', a short internal open reading frame. During trans-translation Ala-aminoacylated tmRNA acts like a tRNA, entering the A-site of stalled ribosomes, displacing the stalled mRNA. The ribosome then switches to translate the ORF on the tmRNA; the nascent peptide is terminated with the 'tag peptide' encoded by the tmRNA and targeted for degradation. The ribosome is freed to recommence translation, which seems to be the essential function of trans-translation. The chain is SsrA-binding protein from Mannheimia succiniciproducens (strain KCTC 0769BP / MBEL55E).